The following is a 181-amino-acid chain: Organelle RRM domain-containing protein 6, chloroplastic (181 aa).

The N-terminal 44 residues, 1–44 (MAISLGRVVVPSCTISGDRLFIPNFSAICSVSCGRINVGTGVIS), are a transit peptide targeting the chloroplast. Residues 77 to 155 (TKLYVSGLSF…RVIFVEEAKT (79 aa)) enclose the RRM domain. Residues 155-169 (TRSDMSRAKPRRDFP) are compositionally biased toward basic and acidic residues. Residues 155 to 181 (TRSDMSRAKPRRDFPKPQSKPRTFRTW) are disordered.

Interacts with MORF8/RIP1, MORF2/RIP2, MORF9/RIP9 and VAR3/OZ1.

Its subcellular location is the plastid. It is found in the chloroplast. Functionally, involved in C-to-U editing of chloroplastic RNA. Required for the photosynthetic subunit psbF transcript editing in chloroplast. The chain is Organelle RRM domain-containing protein 6, chloroplastic from Arabidopsis thaliana (Mouse-ear cress).